The following is a 72-amino-acid chain: MAVFKVFYQHNRDEVIVRENTQSLYVEAQTEEQVRRYLKDRNFNIEFITKLEGAHLDYEKENSEHFNVEIAK.

It belongs to the RNA polymerase subunit epsilon family. In terms of assembly, RNAP is composed of a core of 2 alpha, a beta and a beta' subunit. The core is associated with a delta subunit, and at least one of epsilon or omega. When a sigma factor is associated with the core the holoenzyme is formed, which can initiate transcription.

It carries out the reaction RNA(n) + a ribonucleoside 5'-triphosphate = RNA(n+1) + diphosphate. Functionally, a non-essential component of RNA polymerase (RNAP). The sequence is that of DNA-directed RNA polymerase subunit epsilon from Staphylococcus aureus (strain JH1).